A 678-amino-acid chain; its full sequence is MKKNISYGKHKTFPSKLNGLEKQHSLSKNERDNFPFLSNIPWDNANQGSDKNQLKGAKLIQEFVKHLPHKPGVYRMFDENGNVLYIGKARNLKKRVSNYTCEQRHNNRITRMIRATYHMEFVVTHTETEALLLEANLIKRLHPRFNVLLRDDKSFPYIIITENHRAPALYKHRGARTRKAHYFGPFASSSAVTQTINVLQRAFLLRTCTDSVLENRTRPCLLYQIKRCSAPCTHEINENDYRELVRGAKAFLSGKSQSVKNDMIQAMHKAAEDLDFEQAAVYRDRLSALSHIQSHQGINPQTIEEADVFAIAQKGGITCIQVFFFRMRQNWGNRSYFPKADPSFSRSEILASFLAQFYDDKPLPKLILLSEEIEEKTLLAEAFSLKANRKIFLSLPKQGERKTLVNHAYINAYEALGHKLAETATHTKLLQGIAEVFQLPQTPHRIEVYDNSHLMGTNAVGAMIVADQMGFLKNQYRKFNIRSTDITPGDDFGMMKEVIKRRFSRLIKEHGLPHESNSIKGEDEDCFSIWPNLILIDGGEGQINSVHTILSELKLDDFITVVGIAKGADRGAGHERFFIKGKTPFTLPPHDPILYFLQRLRDEAHRFAIKTHRIKRKKATLKNPLDEIKNIGSTRKRALLHHFGSAKIVASASLEDLTKVTGISVTIAQKIHNHFNEK.

Residues 1 to 13 show a composition bias toward basic residues; sequence MKKNISYGKHKTF. Positions 1-25 are disordered; that stretch reads MKKNISYGKHKTFPSKLNGLEKQHS. The GIY-YIG domain occupies 69–147; that stretch reads HKPGVYRMFD…IKRLHPRFNV (79 aa). One can recognise a UVR domain in the interval 257 to 292; sequence QSVKNDMIQAMHKAAEDLDFEQAAVYRDRLSALSHI.

It belongs to the UvrC family. Interacts with UvrB in an incision complex.

The protein localises to the cytoplasm. In terms of biological role, the UvrABC repair system catalyzes the recognition and processing of DNA lesions. UvrC both incises the 5' and 3' sides of the lesion. The N-terminal half is responsible for the 3' incision and the C-terminal half is responsible for the 5' incision. The sequence is that of UvrABC system protein C from Bartonella quintana (strain Toulouse) (Rochalimaea quintana).